The chain runs to 610 residues: Elongation factor 4 (610 aa).

A tr-type G domain is found at E12 to Q194. Residues D24–T29 and N141–D144 contribute to the GTP site.

It belongs to the TRAFAC class translation factor GTPase superfamily. Classic translation factor GTPase family. LepA subfamily.

The protein localises to the cell membrane. It catalyses the reaction GTP + H2O = GDP + phosphate + H(+). Its function is as follows. Required for accurate and efficient protein synthesis under certain stress conditions. May act as a fidelity factor of the translation reaction, by catalyzing a one-codon backward translocation of tRNAs on improperly translocated ribosomes. Back-translocation proceeds from a post-translocation (POST) complex to a pre-translocation (PRE) complex, thus giving elongation factor G a second chance to translocate the tRNAs correctly. Binds to ribosomes in a GTP-dependent manner. The sequence is that of Elongation factor 4 from Streptococcus thermophilus (strain CNRZ 1066).